Consider the following 143-residue polypeptide: Glutamate-rich protein 4 (143 aa).

Residues 90-106 (LEEEEEDDDEEEQEEEG) are compositionally biased toward acidic residues. A disordered region spans residues 90 to 143 (LEEEEEDDDEEEQEEEGEGKNCVEENKGLQGKQGEKCSGNPYPAQRLPDFEMTI). Basic and acidic residues predominate over residues 107–116 (EGKNCVEENK).

This chain is Glutamate-rich protein 4 (Erich4), found in Rattus norvegicus (Rat).